Here is a 228-residue protein sequence, read N- to C-terminus: Leucokinins (228 aa).

A signal peptide spans 1 to 18 (MAMLLQVALPLLAAVSWG). A propeptide spanning residues 19–164 (WELNENDDSL…PRFSPVSAIQ (146 aa)) is cleaved from the precursor. Residues 80-118 (EFSENNEAEDKSPTSAQNTQEHIPGNNFPPPAASNPPVN) are disordered. Residues Gly-180 and Gly-193 each carry the glycine amide modification. Positions 197–209 (NTGRVHRQPKVVI) are excised as a propeptide. Position 217 is a glycine amide (Gly-217). Residues 221–228 (NQKDDNVF) constitute a propeptide that is removed on maturation.

The protein resides in the secreted. Functionally, stimulates both fluid secretion by the Malpighian tubules and hindgut contractions. Depolarize the transepithelial voltage of the Malpighian tubules in concentrations of less than 10(-9) M and increase the frequency of hindgut contractions at concentrations above 10(-8) M. This Aedes aegypti (Yellowfever mosquito) protein is Leucokinins.